We begin with the raw amino-acid sequence, 465 residues long: Protein hedgehog (465 aa).

Cys79 is lipidated: N-palmitoyl cysteine. Positions 143, 144, 149, 179, 180, 183, and 185 each coordinate Ca(2+). Gly251 is lipidated: Cholesterol glycine ester.

This sequence belongs to the hedgehog family. Interacts with shf. The C-terminal part of the hedgehog protein precursor displays an autoproteolysis activity that results in the cleavage of the full-length protein into two parts (N-product and C-product). In addition, the C-terminal part displays a cholesterol transferase activity that results by the covalent attachment of a cholesterol moiety to the C-terminal of the newly generated N-product. The N-product is the active species in both local and long-range signaling, whereas the C-product has no signaling activity. Post-translationally, cholesterylation is required for N-product targeting to lipid rafts and multimerization. In terms of processing, N-palmitoylation by Rasp of the hedgehog N-product, within the secretory pathway, is required for the embryonic and larval patterning activities of the hedgehog signal.

The protein localises to the nucleus. The protein resides in the cytoplasm. It localises to the cell membrane. The enzyme catalyses glycyl-L-cysteinyl-[protein] + cholesterol + H(+) = [protein]-C-terminal glycyl cholesterol ester + N-terminal L-cysteinyl-[protein]. Functionally, the C-terminal part of the hedgehog protein precursor displays an autoproteolysis activity that results in the cleavage of the full-length protein into two parts (N-product and C-product). In addition, the C-terminal part displays a cholesterol transferase activity that results by the covalent attachment of a cholesterol moiety to the C-terminal of the newly generated N-product. Once cleaved, the C-product has no signaling activity and diffuses from the cell. The dually lipidated hedgehog protein N-product is a morphogen which is essential for a variety of patterning events during development. Establishes the anterior-posterior axis of the embryonic segments and patterns the larval imaginal disks. Binds to the patched (ptc) receptor, which functions in association with smoothened (smo), to activate the transcription of target genes wingless (wg), decapentaplegic (dpp) and ptc. In the absence of hh, ptc represses the constitutive signaling activity of smo through fused (fu). Essential component of a signaling pathway which regulates the Duox-dependent gut immune response to bacterial uracil; required to activate Cad99C-dependent endosome formation, norpA-dependent Ca2+ mobilization and p38 MAPK, which are essential steps in the Duox-dependent production of reactive oxygen species (ROS) in response to intestinal bacterial infection. During photoreceptor differentiation, it up-regulates transcription of Ubr3, which in turn promotes the hh-signaling pathway by mediating the ubiquitination and degradation of cos. This Drosophila erecta (Fruit fly) protein is Protein hedgehog.